The following is a 377-amino-acid chain: Queuine tRNA-ribosyltransferase (377 aa).

Asp94 serves as the catalytic Proton acceptor. Substrate is bound by residues 94 to 98 (DSGGF), Asp148, Gln191, and Gly218. The segment at 249 to 255 (GVGTPDD) is RNA binding. The active-site Nucleophile is Asp268. The RNA binding; important for wobble base 34 recognition stretch occupies residues 273–277 (TRAGR).

This sequence belongs to the queuine tRNA-ribosyltransferase family. Homodimer. Within each dimer, one monomer is responsible for RNA recognition and catalysis, while the other monomer binds to the replacement base PreQ1.

The catalysed reaction is 7-aminomethyl-7-carbaguanine + guanosine(34) in tRNA = 7-aminomethyl-7-carbaguanosine(34) in tRNA + guanine. Its pathway is tRNA modification; tRNA-queuosine biosynthesis. Its function is as follows. Catalyzes the base-exchange of a guanine (G) residue with the queuine precursor 7-aminomethyl-7-deazaguanine (PreQ1) at position 34 (anticodon wobble position) in tRNAs with GU(N) anticodons (tRNA-Asp, -Asn, -His and -Tyr). Catalysis occurs through a double-displacement mechanism. The nucleophile active site attacks the C1' of nucleotide 34 to detach the guanine base from the RNA, forming a covalent enzyme-RNA intermediate. The proton acceptor active site deprotonates the incoming PreQ1, allowing a nucleophilic attack on the C1' of the ribose to form the product. After dissociation, two additional enzymatic reactions on the tRNA convert PreQ1 to queuine (Q), resulting in the hypermodified nucleoside queuosine (7-(((4,5-cis-dihydroxy-2-cyclopenten-1-yl)amino)methyl)-7-deazaguanosine). The sequence is that of Queuine tRNA-ribosyltransferase from Brucella suis biovar 1 (strain 1330).